The chain runs to 221 residues: PSALRLVLLNKADAPEALKSFAEVLKVRLFEKQFGWPVFIISAVARKALDPLKYKLLEIVQDARKKRPKEKAESVIIKPKAVVHRTKGQFQIKPDPEVQGGFIITGEKPERWILQTDFENDEAVGYLADRLSKLGIEDGLRKAGAHVGANVTIGGISFEWEPMTTAGDDPILTGRGTDVRLEQTSRISAAERKRASQVRRGLIDELDYGEDQEASRERWEG.

The OBG-type G domain maps to 1-61; the sequence is PSALRLVLLN…LKYKLLEIVQ (61 aa). GTP is bound by residues 10–13 and 42–44; these read NKAD and SAV. An OCT domain is found at 82–162; sequence VVHRTKGQFQ…IGGISFEWEP (81 aa).

The protein belongs to the TRAFAC class OBG-HflX-like GTPase superfamily. OBG GTPase family. Monomer. Mg(2+) is required as a cofactor.

It localises to the cytoplasm. In terms of biological role, an essential GTPase which binds GTP, GDP and possibly (p)ppGpp with moderate affinity, with high nucleotide exchange rates and a fairly low GTP hydrolysis rate. Plays a role in control of the cell cycle, stress response, ribosome biogenesis and in those bacteria that undergo differentiation, in morphogenesis control. The protein is GTPase Obg of Corynebacterium melassecola.